Here is a 164-residue protein sequence, read N- to C-terminus: Pyruvoyl-dependent arginine decarboxylase (164 aa).

The residue at position 52 (S52) is a Pyruvic acid (Ser).

This sequence belongs to the PdaD family. Pyruvate is required as a cofactor.

It carries out the reaction L-arginine + H(+) = agmatine + CO2. The chain is Pyruvoyl-dependent arginine decarboxylase from Methanococcus maripaludis (strain C5 / ATCC BAA-1333).